The sequence spans 355 residues: tRNA pseudouridine synthase D (355 aa).

Residue Asp-84 is the Nucleophile of the active site. Residues 160 to 306 (GVPNYFGLQR…MAHERRILRL (147 aa)) enclose the TRUD domain.

This sequence belongs to the pseudouridine synthase TruD family.

The enzyme catalyses uridine(13) in tRNA = pseudouridine(13) in tRNA. Functionally, responsible for synthesis of pseudouridine from uracil-13 in transfer RNAs. This is tRNA pseudouridine synthase D from Pseudomonas aeruginosa (strain ATCC 15692 / DSM 22644 / CIP 104116 / JCM 14847 / LMG 12228 / 1C / PRS 101 / PAO1).